The primary structure comprises 266 residues: Thymidylate synthase (266 aa).

Arg-24 lines the dUMP pocket. (6R)-5,10-methylene-5,6,7,8-tetrahydrofolate is bound at residue His-54. Residue 129 to 130 (RR) coordinates dUMP. The active-site Nucleophile is the Cys-149. DUMP is bound by residues 169 to 172 (RSAD), Asn-180, and 210 to 212 (HIY). Asp-172 serves as a coordination point for (6R)-5,10-methylene-5,6,7,8-tetrahydrofolate. Ala-265 lines the (6R)-5,10-methylene-5,6,7,8-tetrahydrofolate pocket.

Belongs to the thymidylate synthase family. Bacterial-type ThyA subfamily. As to quaternary structure, homodimer.

The protein localises to the cytoplasm. It catalyses the reaction dUMP + (6R)-5,10-methylene-5,6,7,8-tetrahydrofolate = 7,8-dihydrofolate + dTMP. Its pathway is pyrimidine metabolism; dTTP biosynthesis. Its function is as follows. Catalyzes the reductive methylation of 2'-deoxyuridine-5'-monophosphate (dUMP) to 2'-deoxythymidine-5'-monophosphate (dTMP) while utilizing 5,10-methylenetetrahydrofolate (mTHF) as the methyl donor and reductant in the reaction, yielding dihydrofolate (DHF) as a by-product. This enzymatic reaction provides an intracellular de novo source of dTMP, an essential precursor for DNA biosynthesis. The polypeptide is Thymidylate synthase (Mycolicibacterium smegmatis (strain ATCC 700084 / mc(2)155) (Mycobacterium smegmatis)).